Consider the following 504-residue polypeptide: Sodium-coupled neutral amino acid transporter 3 (504 aa).

At Ser52 the chain carries Phosphoserine; by PKC. N-linked (GlcNAc...) asparagine glycosylation is present at Asn73. A run of 5 helical transmembrane segments spans residues 82–102 (GILG…LFLL), 105–125 (VALL…IVGI), 143–163 (AAAL…LYII), 186–206 (MDGN…LALM), and 212–232 (LGYS…AVIY). Cys239 and Cys275 form a disulfide bridge. Residues Asn247 and Asn251 are each glycosylated (N-linked (GlcNAc...) asparagine). The helical transmembrane segment at 287 to 307 (AYTIPIMAFAFVCHPEVLPIY) threads the bilayer. Asn323 is a glycosylation site (N-linked (GlcNAc...) asparagine). 5 helical membrane passes run 324-344 (LSIA…YLTF), 366-386 (ILCV…IVLF), 408-428 (VLIA…APNI), 431-451 (IFGI…PAIF), and 469-489 (ILAL…LSFI).

Belongs to the amino acid/polyamine transporter 2 family. In terms of processing, phosphorylation at Ser-52 induces internalization and sequestration into an intracellular reservoir. During dephosphorylation by protein phosphatases, can recycle back to the plasma membrane and regain activity. Prolonged phosphorylation results in its degradation. Highly expressed in liver. Expressed in skeletal muscle. Expressed in kidney, heart and brain. Not detected in gut, lung or spleen. Expressed ubiquitously in hepatocytes in liver whereas in kidney expression is restricted to the medulla. Within brain, expressed in glial cells. In the cerebellum, expressed on Bergmann glial fibers in the molecular layer and astrocytes in the granule layer. Expressed in brain kidney and liver (at protein level). In the adult kidney, highly expressed in the outer strip of the outer medulla and medullary rays penetrating into the kidney cortex (at protein level).

The protein localises to the cell membrane. It localises to the basolateral cell membrane. It carries out the reaction L-glutamine(out) + Na(+)(out) + H(+)(in) = L-glutamine(in) + Na(+)(in) + H(+)(out). It catalyses the reaction L-asparagine(out) + Na(+)(out) + H(+)(in) = L-asparagine(in) + Na(+)(in) + H(+)(out). The enzyme catalyses L-histidine(out) + Na(+)(out) + H(+)(in) = L-histidine(in) + Na(+)(in) + H(+)(out). Its activity is regulated as follows. L-glutamine efflux and L-glutamine uptake are regulated by CO2/HCO3(-) through SLC4A4 leading to modulation of cytosolic pH and Na(+)concentration. Functionally, symporter that cotransports specific neutral amino acids and sodium ions, coupled to an H(+) antiporter activity. Mainly participates in the glutamate-GABA-glutamine cycle in brain where it transports L-glutamine from astrocytes in the intercellular space for the replenishment of both neurotransmitters glutamate and gamma-aminobutyric acid (GABA) in neurons. Also functions as the major influx transporter in ganglion cells mediating the uptake of glutamine. The transport activity is specific for L-glutamine, L-histidine and L-asparagine. The transport is electroneutral coupled to the cotransport of 1 Na(+) and the antiport of 1 H(+), pH dependent, saturable, Li(+) tolerant and functions in both direction depending on the concentration gradients of its substrates and cotransported ions. Also mediates an amino acid-gated H(+) conductance that is not stoichiometrically coupled to the amino acid transport but which influences the ionic gradients that drive the amino acid transport. In addition, may play a role in nitrogen metabolism, amino acid homeostasis, glucose metabolism and renal ammoniagenesis. This chain is Sodium-coupled neutral amino acid transporter 3, found in Rattus norvegicus (Rat).